The following is a 455-amino-acid chain: Major facilitator superfamily domain-containing protein 10 (455 aa).

The next 11 helical transmembrane spans lie at 27-47 (VVFL…PLLP), 86-106 (VLFG…CAPL), 113-135 (CLGR…AVWA), 148-168 (LIGG…ADLG), 176-196 (GMAV…MLGA), 202-222 (MAPW…FCFL), 275-295 (LGLV…TLSF), 310-327 (KMFF…GAYA), 336-356 (VAAV…IGWG), 359-379 (LPVL…VVPC), and 421-441 (LAGA…PFFL).

The protein belongs to the major facilitator superfamily. As to expression, expressed in luminal membrane of renal tubules (at protein level). Detected in all tissues tested with higher expression in heart, splee, kidney, leukocytes and prostate.

It localises to the nucleus inner membrane. It is found in the cell membrane. Functionally, probable organic anion transporter which may serve as a transporter for some non-steroidal anti-inflammatory drugs (NSAIDs) as well as other organic anions across the luminal membranes of renal proximal tubules at the final excretion step into the urine. The polypeptide is Major facilitator superfamily domain-containing protein 10 (MFSD10) (Homo sapiens (Human)).